Consider the following 127-residue polypeptide: Protein E7 (127 aa).

The E7 terminal domain stretch occupies residues 2-56 (VQGPTTHRNLDDSPAGPLLILSPCAGTPTRVPAAPDAPDFRLPCHFGRPTRKRGP). The tract at residues 33 to 66 (PAAPDAPDFRLPCHFGRPTRKRGPSTPPLSSPGK) is disordered. Residues 82-118 (CGHCGKDLTFAVKTGSTTLLGFEHLLNSDLDLLCPRC) fold into a zinc finger. Residues 100–108 (LLGFEHLLN) carry the Nuclear export signal motif.

The protein belongs to the papillomaviridae E7 protein family. In terms of assembly, homodimer. Homooligomer. Interacts with host RB1; this interaction induces dissociation of RB1-E2F1 complex thereby disrupting RB1 activity. Interacts with host EP300; this interaction represses EP300 transcriptional activity. Interacts with protein E2; this interaction inhibits E7 oncogenic activity. Interacts with host TMEM173/STING; this interaction impairs the ability of TMEM173/STING to sense cytosolic DNA and promote the production of type I interferon (IFN-alpha and IFN-beta). Highly phosphorylated.

Its subcellular location is the host cytoplasm. The protein localises to the host nucleus. Functionally, plays a role in viral genome replication by driving entry of quiescent cells into the cell cycle. Stimulation of progression from G1 to S phase allows the virus to efficiently use the cellular DNA replicating machinery to achieve viral genome replication. E7 protein has both transforming and trans-activating activities. Induces the disassembly of the E2F1 transcription factor from RB1, with subsequent transcriptional activation of E2F1-regulated S-phase genes. Interferes with host histone deacetylation mediated by HDAC1 and HDAC2, leading to transcription activation. Also plays a role in the inhibition of both antiviral and antiproliferative functions of host interferon alpha. Interaction with host TMEM173/STING impairs the ability of TMEM173/STING to sense cytosolic DNA and promote the production of type I interferon (IFN-alpha and IFN-beta). The protein is Protein E7 of Bos taurus (Bovine).